The following is a 372-amino-acid chain: MTSIEPTHTGKKVIVGMSGGVDSSVSAYLLMQQGYQVEGLFMKNWEEDDNDEYCAAAEDLKDAQAVCDKLGIKLHTVNFAAEYWDNVFEYFLAEYKAGRTPNPDIMCNKEIKFKAFLDFADDILDADYIAMGHYVRRRDNADGTTQMLRGVDNNKDQSYFLYTLSHEQVARSLFPVGELEKHEVREIAKKMGLITHDKKDSTGICFIGERKFTEFLGNYLPAQPGNIETAEGEVIGKHQGLMYHTLGQRKGLGIGGMKNSNDDPWYVVDKDLKRNVLVVGQGGHHPRLMSNGMLVNQLHWVDRKGPAEGSQIVVKTRYRQQDIPCTLTYLDDNTLKVVFDEPVAAVTPGQSAVFYDGEVCLGGGIIDQLIRG.

ATP contacts are provided by residues 16–23 (GMSGGVDS) and Met-42. Positions 102 to 104 (NPD) are interaction with target base in tRNA. Cys-107 acts as the Nucleophile in catalysis. Cys-107 and Cys-205 form a disulfide bridge. Residue Gly-132 participates in ATP binding. The tract at residues 155–157 (KDQ) is interaction with tRNA. Residue Cys-205 is the Cysteine persulfide intermediate of the active site. The interaction with tRNA stretch occupies residues 317 to 318 (RY).

Belongs to the MnmA/TRMU family.

Its subcellular location is the cytoplasm. The catalysed reaction is S-sulfanyl-L-cysteinyl-[protein] + uridine(34) in tRNA + AH2 + ATP = 2-thiouridine(34) in tRNA + L-cysteinyl-[protein] + A + AMP + diphosphate + H(+). In terms of biological role, catalyzes the 2-thiolation of uridine at the wobble position (U34) of tRNA, leading to the formation of s(2)U34. The polypeptide is tRNA-specific 2-thiouridylase MnmA (Shewanella sp. (strain MR-4)).